The primary structure comprises 799 residues: Oligopeptide transporter 1 (799 aa).

Disordered stretches follow at residues Met-1–Ile-26 and Asp-43–Asp-64. Residues Met-1–Arg-108 are Extracellular-facing. Over residues Ser-13–Ile-26 the composition is skewed to low complexity. N-linked (GlcNAc...) asparagine glycosylation is present at Asn-46. Phosphothreonine occurs at positions 48, 50, and 51. Residues Thr-109–Leu-129 traverse the membrane as a helical segment. The Cytoplasmic portion of the chain corresponds to Arg-130–Glu-135. The chain crosses the membrane as a helical span at residues Ile-136–Pro-156. Over Asp-157–Glu-177 the chain is Extracellular. Residues His-178 to Leu-198 traverse the membrane as a helical segment. The Cytoplasmic segment spans residues Asn-199 to Asn-210. Residues Val-211–Leu-231 form a helical membrane-spanning segment. At Thr-232–Arg-276 the chain is on the extracellular side. Residues Phe-277–Thr-297 form a helical membrane-spanning segment. Topologically, residues Gly-298–His-313 are cytoplasmic. The chain crosses the membrane as a helical span at residues Asn-314–Phe-334. Residues Asp-335–Tyr-359 are Extracellular-facing. A helical membrane pass occupies residues Ala-360–Tyr-380. The Cytoplasmic portion of the chain corresponds to Ala-381–Tyr-428. The chain crosses the membrane as a helical span at residues Leu-429–Tyr-449. Residues His-450 to Asp-482 are Extracellular-facing. Residues Trp-483 to Phe-503 form a helical membrane-spanning segment. Residues Asp-504–Pro-508 are Cytoplasmic-facing. Residues Ala-509–Leu-529 traverse the membrane as a helical segment. Over Glu-530–Asn-540 the chain is Extracellular. A helical membrane pass occupies residues Ile-541–Phe-561. The Cytoplasmic segment spans residues Lys-562–Arg-590. A helical transmembrane segment spans residues Leu-591–Gln-611. At Glu-612–Asn-659 the chain is on the extracellular side. Asn-640 is a glycosylation site (N-linked (GlcNAc...) asparagine). The chain crosses the membrane as a helical span at residues Pro-660–Trp-680. Topologically, residues Lys-681–Asn-736 are cytoplasmic. The chain crosses the membrane as a helical span at residues Phe-737 to Cys-757. The Extracellular segment spans residues Val-758–Trp-799.

This sequence belongs to the oligopeptide OPT transporter family.

It localises to the cell membrane. In terms of biological role, high affinity transporter for glutathione. Also transports tetra- and pentapeptides like the opioids leucine enkephalin (Tyr-Gly-Gly-Phe-Leu) and methionine enkephalin (Tyr-Gly-Gly_Phe-Met) across the cell membrane. The chain is Oligopeptide transporter 1 (OPT1) from Saccharomyces cerevisiae (strain ATCC 204508 / S288c) (Baker's yeast).